We begin with the raw amino-acid sequence, 60 residues long: Sec-independent protein translocase protein TatA (60 aa).

The chain crosses the membrane as a helical span at residues 1–21 (MLSNIGVPGLILILVIALVIF).

This sequence belongs to the TatA/E family. As to quaternary structure, forms a complex with TatC.

It localises to the cell membrane. Its function is as follows. Part of the twin-arginine translocation (Tat) system that transports large folded proteins containing a characteristic twin-arginine motif in their signal peptide across membranes. TatA could form the protein-conducting channel of the Tat system. This is Sec-independent protein translocase protein TatA from Anoxybacillus flavithermus (strain DSM 21510 / WK1).